The following is a 544-amino-acid chain: Chaperonin GroEL 3 (544 aa).

ATP contacts are provided by residues 30–33 (TLGP), Lys-51, 87–91 (DGTTT), Gly-415, and Asp-495.

Belongs to the chaperonin (HSP60) family. As to quaternary structure, forms a cylinder of 14 subunits composed of two heptameric rings stacked back-to-back. Interacts with the co-chaperonin GroES.

It localises to the cytoplasm. It carries out the reaction ATP + H2O + a folded polypeptide = ADP + phosphate + an unfolded polypeptide.. In terms of biological role, together with its co-chaperonin GroES, plays an essential role in assisting protein folding. The GroEL-GroES system forms a nano-cage that allows encapsulation of the non-native substrate proteins and provides a physical environment optimized to promote and accelerate protein folding. The chain is Chaperonin GroEL 3 from Psychromonas ingrahamii (strain DSM 17664 / CCUG 51855 / 37).